We begin with the raw amino-acid sequence, 114 residues long: Probable non-functional T cell receptor beta variable 6-7 (114 aa).

A signal peptide spans 1–21 (MSLGLLCCVAFSLLWAGPMNA). In terms of domain architecture, Ig-like spans 22–114 (GVTQTPKFHV…TSVYFCASSY (93 aa)). A disulfide bridge connects residues cysteine 42 and cysteine 110. An N-linked (GlcNAc...) asparagine glycan is attached at asparagine 84.

In terms of assembly, alpha-beta TR is a heterodimer composed of an alpha and beta chain; disulfide-linked. The alpha-beta TR is associated with the transmembrane signaling CD3 coreceptor proteins to form the TR-CD3 (TcR or TCR). The assembly of alpha-beta TR heterodimers with CD3 occurs in the endoplasmic reticulum where a single alpha-beta TR heterodimer associates with one CD3D-CD3E heterodimer, one CD3G-CD3E heterodimer and one CD247 homodimer forming a stable octameric structure. CD3D-CD3E and CD3G-CD3E heterodimers preferentially associate with TR alpha and TR beta chains, respectively. The association of the CD247 homodimer is the last step of TcR assembly in the endoplasmic reticulum and is required for transport to the cell surface.

The protein resides in the cell membrane. Functionally, probable non-functional open reading frame (ORF) of V region of the variable domain of T cell receptor (TR) beta chain. Non-functional ORF generally cannot participate in the synthesis of a productive T cell receptor (TR) chain due to altered V-(D)-J or switch recombination and/or splicing site (at mRNA level) and/or conserved amino acid change (protein level). Alpha-beta T cell receptors are antigen specific receptors which are essential to the immune response and are present on the cell surface of T lymphocytes. Recognize peptide-major histocompatibility (MH) (pMH) complexes that are displayed by antigen presenting cells (APC), a prerequisite for efficient T cell adaptive immunity against pathogens. Binding of alpha-beta TR to pMH complex initiates TR-CD3 clustering on the cell surface and intracellular activation of LCK that phosphorylates the ITAM motifs of CD3G, CD3D, CD3E and CD247 enabling the recruitment of ZAP70. In turn ZAP70 phosphorylates LAT, which recruits numerous signaling molecules to form the LAT signalosome. The LAT signalosome propagates signal branching to three major signaling pathways, the calcium, the mitogen-activated protein kinase (MAPK) kinase and the nuclear factor NF-kappa-B (NF-kB) pathways, leading to the mobilization of transcription factors that are critical for gene expression and essential for T cell growth and differentiation. The T cell repertoire is generated in the thymus, by V-(D)-J rearrangement. This repertoire is then shaped by intrathymic selection events to generate a peripheral T cell pool of self-MH restricted, non-autoaggressive T cells. Post-thymic interaction of alpha-beta TR with the pMH complexes shapes TR structural and functional avidity. This is Probable non-functional T cell receptor beta variable 6-7 from Homo sapiens (Human).